The chain runs to 251 residues: Triosephosphate isomerase (251 aa).

Asn9–Lys11 contacts substrate. His95 serves as the catalytic Electrophile. The active-site Proton acceptor is the Glu167. Substrate-binding positions include Gly173, Ser213, and Gly234–Gly235.

The protein belongs to the triosephosphate isomerase family. Homodimer.

It is found in the cytoplasm. It carries out the reaction D-glyceraldehyde 3-phosphate = dihydroxyacetone phosphate. Its pathway is carbohydrate biosynthesis; gluconeogenesis. The protein operates within carbohydrate degradation; glycolysis; D-glyceraldehyde 3-phosphate from glycerone phosphate: step 1/1. Functionally, involved in the gluconeogenesis. Catalyzes stereospecifically the conversion of dihydroxyacetone phosphate (DHAP) to D-glyceraldehyde-3-phosphate (G3P). This chain is Triosephosphate isomerase, found in Geotalea uraniireducens (strain Rf4) (Geobacter uraniireducens).